The sequence spans 333 residues: Nucleoid-associated protein YE1421 (333 aa).

The protein belongs to the YejK family.

It localises to the cytoplasm. The protein localises to the nucleoid. The polypeptide is Nucleoid-associated protein YE1421 (Yersinia enterocolitica serotype O:8 / biotype 1B (strain NCTC 13174 / 8081)).